The sequence spans 296 residues: Small ribosomal subunit protein uS2 (296 aa).

A disordered region spans residues 252–296; it reads TSSKTVSKLKQSKKLSKTQNIDEETNTEFDQALGGACENNNSDNT.

The protein belongs to the universal ribosomal protein uS2 family.

The protein is Small ribosomal subunit protein uS2 (rpsB) of Rickettsia prowazekii (strain Madrid E).